Reading from the N-terminus, the 2167-residue chain is Beige protein homolog 1 (2167 aa).

The BEACH-type PH domain maps to 1368-1499 (KDNDSIATIW…VRDDVLRVLN (132 aa)). Residues 1545–1839 (SANNSLIDGF…QIFQEPHPEK (295 aa)) enclose the BEACH domain. Residue Lys1667 forms a Glycyl lysine isopeptide (Lys-Gly) (interchain with G-Cter in ubiquitin) linkage. WD repeat units lie at residues 1927 to 1965 (THMAQITSFAYWKLGEFITGDKNGLIKVWKYRKDKHSVS), 1976 to 2015 (GHLCELKEMRCYHDYNTLLTLDISGLVYVWDMINFELVRQ), 2017 to 2054 (TNDAQKVAISQHAGSIMVLTKNNAISIFNLNGQIYTSK), 2072 to 2111 (KLDAGYRKHIYWKEMEILLVGFEDGTIEIYELFLNFHNEW), and 2129 to 2167 (SIKGQGKTYLSQKRRKDTAEPHEIEVIAGTLDGRLAIWY).

It localises to the cytoplasm. Its subcellular location is the membrane. In terms of biological role, may be involved in protein sorting and cell wall formation. The sequence is that of Beige protein homolog 1 (BPH1) from Saccharomyces cerevisiae (strain ATCC 204508 / S288c) (Baker's yeast).